Reading from the N-terminus, the 283-residue chain is ATP phosphoribosyltransferase (283 aa).

The protein belongs to the ATP phosphoribosyltransferase family. Long subfamily. Mg(2+) serves as cofactor.

It localises to the cytoplasm. The enzyme catalyses 1-(5-phospho-beta-D-ribosyl)-ATP + diphosphate = 5-phospho-alpha-D-ribose 1-diphosphate + ATP. Its pathway is amino-acid biosynthesis; L-histidine biosynthesis; L-histidine from 5-phospho-alpha-D-ribose 1-diphosphate: step 1/9. Feedback inhibited by histidine. Its function is as follows. Catalyzes the condensation of ATP and 5-phosphoribose 1-diphosphate to form N'-(5'-phosphoribosyl)-ATP (PR-ATP). Has a crucial role in the pathway because the rate of histidine biosynthesis seems to be controlled primarily by regulation of HisG enzymatic activity. The chain is ATP phosphoribosyltransferase from Bifidobacterium longum (strain NCC 2705).